Reading from the N-terminus, the 392-residue chain is FK506-binding protein 4 (392 aa).

2 disordered regions span residues 58-116 (NPEL…NEID) and 161-284 (GNYV…PKTK). Composition is skewed to acidic residues over residues 73-86 (DGLEEDESESEQEA), 104-116 (SESEDSEDENEID), and 172-219 (SDSD…DASD). Serine 80 and serine 82 each carry phosphoserine. Composition is skewed to basic and acidic residues over residues 220-234 (IESRLDELVKKDEKK) and 252-279 (SAKPAEKKQTTKKDKKAEKVKDSEESKP). Residues 306–392 (GTRVGMRYVG…TFDVKLVSMK (87 aa)) form the PPIase FKBP-type domain.

Belongs to the FKBP-type PPIase family. FKBP3/4 subfamily. In terms of assembly, binds to histones H3 and H4. Interacts with NOP53.

It localises to the nucleus. It catalyses the reaction [protein]-peptidylproline (omega=180) = [protein]-peptidylproline (omega=0). PPIase that acts as a histone chaperone. Histone proline isomerase that increases the rate of cis-trans isomerization at 'Pro-17' (H3P16), 'Pro-31' (H3P30) and 'Pro-39 (H3P38) on the histone H3 N-terminal tail. H3P16 and H3P30 are the major proline targets with little activity shown against H3P38. H3P38 isomerization influences SET2-mediated H3K36 methylation thereby regulating gene expression. This is FK506-binding protein 4 from Saccharomyces cerevisiae (strain ATCC 204508 / S288c) (Baker's yeast).